A 635-amino-acid chain; its full sequence is Surface protein F (635 aa).

The N-terminal stretch at 1–37 is a signal peptide; that stretch reads MAKYRGKPFQLYVKLSCSTMMATSIILTNILPYDAQA. 2 stretches are compositionally biased toward basic and acidic residues: residues 101–112 and 193–202; these read NELDSKDNKSSH and KSKDASKDTS. Disordered regions lie at residues 101 to 122 and 192 to 228; these read NELD…SDID and HKSK…SGHV. Residues 597–601 carry the LPXTG sorting signal motif; it reads LPKAG. Ala-600 carries the post-translational modification Pentaglycyl murein peptidoglycan amidated alanine. A propeptide spans 601–635 (removed by sortase); that stretch reads GETIKEHWLPISVIVGAMGVLMIWLSRRNKLKNKA.

Its subcellular location is the secreted. It is found in the cell wall. The sequence is that of Surface protein F from Staphylococcus aureus (strain NCTC 8325 / PS 47).